Consider the following 714-residue polypeptide: Inducible lysine decarboxylase (714 aa).

Lys367 is modified (N6-(pyridoxal phosphate)lysine).

The protein belongs to the Orn/Lys/Arg decarboxylase class-I family. In terms of assembly, homodecamer. Interacts with RavA. Pyridoxal 5'-phosphate serves as cofactor.

Its subcellular location is the cytoplasm. It carries out the reaction L-lysine + H(+) = cadaverine + CO2. The chain is Inducible lysine decarboxylase (cadA) from Salmonella typhi.